A 226-amino-acid chain; its full sequence is 7-carboxy-7-deazaguanine synthase (226 aa).

Substrate is bound by residues Leu-10–Gly-12 and Arg-25. The Radical SAM core domain occupies Tyr-16 to Pro-221. 3 residues coordinate [4Fe-4S] cluster: Cys-29, Cys-33, and Cys-36. Ser-38 lines the Mg(2+) pocket. Thr-69 contacts substrate. Gly-71 lines the S-adenosyl-L-methionine pocket.

This sequence belongs to the radical SAM superfamily. 7-carboxy-7-deazaguanine synthase family. Homodimer. [4Fe-4S] cluster serves as cofactor. Requires S-adenosyl-L-methionine as cofactor. The cofactor is Mg(2+).

It carries out the reaction 6-carboxy-5,6,7,8-tetrahydropterin + H(+) = 7-carboxy-7-deazaguanine + NH4(+). It participates in purine metabolism; 7-cyano-7-deazaguanine biosynthesis. Functionally, catalyzes the complex heterocyclic radical-mediated conversion of 6-carboxy-5,6,7,8-tetrahydropterin (CPH4) to 7-carboxy-7-deazaguanine (CDG), a step common to the biosynthetic pathways of all 7-deazapurine-containing compounds. The sequence is that of 7-carboxy-7-deazaguanine synthase from Koribacter versatilis (strain Ellin345).